We begin with the raw amino-acid sequence, 199 residues long: Auxin-responsive protein IAA1 (199 aa).

An EAR-like (transcriptional repression) motif is present at residues 25–29 (LTLRL). The tract at residues 31–74 (GSLAAAAAPDPDRKRSSPSSSDAADAADNSSPLAAAADAPPAPK) is disordered. Positions 47–69 (SPSSSDAADAADNSSPLAAAADA) are enriched in low complexity. The 95-residue stretch at 93–187 (AKFVKVAVDG…TCQRLRLMKS (95 aa)) folds into the PB1 domain.

It belongs to the Aux/IAA family. As to quaternary structure, homodimers and heterodimers. In terms of tissue distribution, highly expressed in flowers. Expressed at low levels in roots and shoots.

Its subcellular location is the nucleus. In terms of biological role, aux/IAA proteins are short-lived transcriptional factors that function as repressors of early auxin response genes at low auxin concentrations. The sequence is that of Auxin-responsive protein IAA1 (IAA1) from Oryza sativa subsp. japonica (Rice).